A 485-amino-acid chain; its full sequence is Glutamyl-tRNA(Gln) amidotransferase subunit A (485 aa).

Catalysis depends on charge relay system residues Lys-79 and Ser-154. Catalysis depends on Ser-178, which acts as the Acyl-ester intermediate.

Belongs to the amidase family. GatA subfamily. Heterotrimer of A, B and C subunits.

It carries out the reaction L-glutamyl-tRNA(Gln) + L-glutamine + ATP + H2O = L-glutaminyl-tRNA(Gln) + L-glutamate + ADP + phosphate + H(+). In terms of biological role, allows the formation of correctly charged Gln-tRNA(Gln) through the transamidation of misacylated Glu-tRNA(Gln) in organisms which lack glutaminyl-tRNA synthetase. The reaction takes place in the presence of glutamine and ATP through an activated gamma-phospho-Glu-tRNA(Gln). In Sulfurihydrogenibium sp. (strain YO3AOP1), this protein is Glutamyl-tRNA(Gln) amidotransferase subunit A.